Reading from the N-terminus, the 150-residue chain is Heat shock protein beta-3 (150 aa).

The sHSP domain maps to 47–150 (KTRAAQSPPV…VEVKDPVGTK (104 aa)).

Belongs to the small heat shock protein (HSP20) family.

It localises to the cytoplasm. It is found in the nucleus. Inhibitor of actin polymerization. The protein is Heat shock protein beta-3 (HSPB3) of Homo sapiens (Human).